The following is a 483-amino-acid chain: NADH-quinone oxidoreductase subunit N (483 aa).

Transmembrane regions (helical) follow at residues 8 to 28 (INLA…GLLL), 45 to 65 (IAAG…GATQ), 78 to 98 (FAAF…VVSW), 106 to 126 (LGNG…MFMI), 131 to 151 (FLVL…LAAY), 166 to 186 (FVLG…IYGV), 206 to 226 (MLGI…KIAA), 241 to 261 (PTSV…AALF), 275 to 295 (WGPI…LAGL), 303 to 323 (LLAY…AVGN), 330 to 350 (VLVY…LILV), 373 to 393 (LALL…LAGF), 399 to 419 (IFMA…VLFS), and 452 to 472 (AIVG…GSLM).

The protein belongs to the complex I subunit 2 family. In terms of assembly, NDH-1 is composed of 14 different subunits. Subunits NuoA, H, J, K, L, M, N constitute the membrane sector of the complex.

Its subcellular location is the cell inner membrane. The catalysed reaction is a quinone + NADH + 5 H(+)(in) = a quinol + NAD(+) + 4 H(+)(out). Its function is as follows. NDH-1 shuttles electrons from NADH, via FMN and iron-sulfur (Fe-S) centers, to quinones in the respiratory chain. The immediate electron acceptor for the enzyme in this species is believed to be ubiquinone. Couples the redox reaction to proton translocation (for every two electrons transferred, four hydrogen ions are translocated across the cytoplasmic membrane), and thus conserves the redox energy in a proton gradient. In Magnetococcus marinus (strain ATCC BAA-1437 / JCM 17883 / MC-1), this protein is NADH-quinone oxidoreductase subunit N.